We begin with the raw amino-acid sequence, 597 residues long: tRNA uridine 5-carboxymethylaminomethyl modification enzyme MnmG (597 aa).

An FAD-binding site is contributed by 10 to 15 (GGGHAG). 267–281 (GPRYCPSIEDKVVRF) is an NAD(+) binding site.

This sequence belongs to the MnmG family. Homodimer. Heterotetramer of two MnmE and two MnmG subunits. FAD serves as cofactor.

The protein localises to the cytoplasm. In terms of biological role, NAD-binding protein involved in the addition of a carboxymethylaminomethyl (cmnm) group at the wobble position (U34) of certain tRNAs, forming tRNA-cmnm(5)s(2)U34. In Thermus thermophilus (strain ATCC BAA-163 / DSM 7039 / HB27), this protein is tRNA uridine 5-carboxymethylaminomethyl modification enzyme MnmG.